The sequence spans 91 residues: Probable Fe(2+)-trafficking protein (91 aa).

It belongs to the Fe(2+)-trafficking protein family.

Could be a mediator in iron transactions between iron acquisition and iron-requiring processes, such as synthesis and/or repair of Fe-S clusters in biosynthetic enzymes. This is Probable Fe(2+)-trafficking protein from Burkholderia thailandensis (strain ATCC 700388 / DSM 13276 / CCUG 48851 / CIP 106301 / E264).